The primary structure comprises 118 residues: uncharacterized protein (118 aa).

It belongs to the HesB/IscA family. Ycf83 subfamily.

This is an uncharacterized protein from Synechocystis sp. (strain ATCC 27184 / PCC 6803 / Kazusa).